We begin with the raw amino-acid sequence, 611 residues long: MHRFNPRRSACDRCRGHKLRCIRLDPGPNDTGALLPCKRCVKAGAECIHTANLSVKPPGDGHHSAHRATESPGHPAAFQQETRVSDRQLRESSLGISPTQPAPQRQTQRWSSSSGPHRPEDRESLPPWHMFATPMFSRQQLGFSKLPSHANGPPDDRTADGFEVGSEAALAAPPGSERSPHRTSRAPSDGTTTFSLVDKVFDLDGRAVCPLSGSVLQENAGIVTAAASTTVTSAQTHHMLPFSQVEPLTPSSYFNVPTCSTLTTGGAGSQSLRDQQMQQHQRHGSASGRSSAATQDSCLQLLSQLSSKFLMDFGKSSAGDWSKMANNNTNNHLSTTISNLFDGLQIFLKTIECLRPATFLENSSSDSECSYSDLCDESEFVGSTGDNQMQVYPGAMAVDHAHEGSSTENSAHRRGRGASPTADAAPQPLDMPMTLTILTCYTWLLKGYEVVLSEIYQMLASQDRHQGLQTLPTIVQGVGIGGFKLEDHPDMQIEIVIHVGWQLLQRIEGLLGVRVVSDEGRGGLGGSSRDESSTEGGDGGGAGSSASDERRILDPRAAAAVLDSWFTTTTRGGSGGSGPGEGTGDSNGGRTVEIKGTIANIRKYLRSYGRN.

A DNA-binding region (zn(2)-C6 fungal-type) is located at residues 11–47 (CDRCRGHKLRCIRLDPGPNDTGALLPCKRCVKAGAEC). 6 disordered regions span residues 53 to 128 (LSVK…LPPW), 169 to 192 (ALAA…DGTT), 265 to 291 (GGAG…GRSS), 401 to 427 (AHEG…AAPQ), 521 to 550 (RGGL…SDER), and 564 to 593 (SWFT…RTVE). Basic and acidic residues predominate over residues 59–69 (GDGHHSAHRAT). Positions 98 to 109 (PTQPAPQRQTQR) are enriched in low complexity. Residues 265-279 (GGAGSQSLRDQQMQQ) are compositionally biased toward polar residues. Positions 572–587 (GGSGGSGPGEGTGDSN) are enriched in gly residues.

The protein localises to the nucleus. Transcription factor that specifically regulates the expression of the gene cluster that mediates the biosynthesis of the mycotoxin pyrichalasin H, a tyrosine-derived cytochalasan that inhibits the growth of rice seedlings, but also inhibits lymphocyte capping and actin polymerization and alters cell morphology. Pyrichalasin H is indicated as the responsible agent for the genus-specific pathogenicity of M.grisea toward crabgrass. This is Pyrichalasin H cluster regulator pyiR from Pyricularia grisea (Crabgrass-specific blast fungus).